We begin with the raw amino-acid sequence, 181 residues long: Transcription termination/antitermination protein NusG (181 aa).

A KOW domain is found at 130 to 161 (PGELVRVSDGPFADFNGVVEEVDYEKSRLKVS).

The protein belongs to the NusG family. In terms of assembly, monomer. Interacts with the transcription termination factor Rho and with RNA polymerase.

Participates in transcription elongation, termination and antitermination. In the absence of Rho, increases the rate of transcription elongation by the RNA polymerase (RNAP), probably by partially suppressing pausing. In the presence of Rho, modulates most Rho-dependent termination events by interacting with the RNAP to render the complex more susceptible to the termination activity of Rho. May be required to overcome a kinetic limitation of Rho to function at certain terminators. Also involved in ribosomal RNA transcriptional antitermination. The protein is Transcription termination/antitermination protein NusG of Yersinia pestis.